A 449-amino-acid chain; its full sequence is GTPase Der (449 aa).

EngA-type G domains follow at residues 2 to 169 (FTVA…QLPP) and 180 to 355 (VRFC…EQLT). GTP is bound by residues 8–15 (GRPNVGKS), 55–59 (DTGGL), 118–121 (NKSE), 186–193 (GKPNVGKS), 233–237 (DTAGI), and 298–301 (NKWD). A KH-like domain is found at 356 to 440 (KKISTSLLND…PITLYFKSKN (85 aa)).

This sequence belongs to the TRAFAC class TrmE-Era-EngA-EngB-Septin-like GTPase superfamily. EngA (Der) GTPase family. As to quaternary structure, associates with the 50S ribosomal subunit.

In terms of biological role, GTPase that plays an essential role in the late steps of ribosome biogenesis. The protein is GTPase Der of Mycoplasma pneumoniae (strain ATCC 29342 / M129 / Subtype 1) (Mycoplasmoides pneumoniae).